The chain runs to 383 residues: Queuine tRNA-ribosyltransferase (383 aa).

Residue aspartate 90 is the Proton acceptor of the active site. Substrate is bound by residues 90 to 94, aspartate 144, glutamine 193, and glycine 227; that span reads DSGGF. The RNA binding stretch occupies residues 258–264; it reads GVGTPED. Aspartate 277 acts as the Nucleophile in catalysis. The interval 282–286 is RNA binding; important for wobble base 34 recognition; that stretch reads TRNAR. Residues cysteine 315, cysteine 317, cysteine 320, and histidine 346 each contribute to the Zn(2+) site.

This sequence belongs to the queuine tRNA-ribosyltransferase family. Homodimer. Within each dimer, one monomer is responsible for RNA recognition and catalysis, while the other monomer binds to the replacement base PreQ1. Requires Zn(2+) as cofactor.

The catalysed reaction is 7-aminomethyl-7-carbaguanine + guanosine(34) in tRNA = 7-aminomethyl-7-carbaguanosine(34) in tRNA + guanine. It functions in the pathway tRNA modification; tRNA-queuosine biosynthesis. In terms of biological role, catalyzes the base-exchange of a guanine (G) residue with the queuine precursor 7-aminomethyl-7-deazaguanine (PreQ1) at position 34 (anticodon wobble position) in tRNAs with GU(N) anticodons (tRNA-Asp, -Asn, -His and -Tyr). Catalysis occurs through a double-displacement mechanism. The nucleophile active site attacks the C1' of nucleotide 34 to detach the guanine base from the RNA, forming a covalent enzyme-RNA intermediate. The proton acceptor active site deprotonates the incoming PreQ1, allowing a nucleophilic attack on the C1' of the ribose to form the product. After dissociation, two additional enzymatic reactions on the tRNA convert PreQ1 to queuine (Q), resulting in the hypermodified nucleoside queuosine (7-(((4,5-cis-dihydroxy-2-cyclopenten-1-yl)amino)methyl)-7-deazaguanosine). This Ralstonia nicotianae (strain ATCC BAA-1114 / GMI1000) (Ralstonia solanacearum) protein is Queuine tRNA-ribosyltransferase.